A 350-amino-acid polypeptide reads, in one-letter code: Ketol-acid reductoisomerase (NADP(+)) (350 aa).

The region spanning 4–187 (VSITTDYSRM…GGARANIIKT (184 aa)) is the KARI N-terminal Rossmann domain. NADP(+) is bound by residues 30 to 33 (YGSQ), arginine 53, threonine 58, and 88 to 91 (DMVQ). The active site involves histidine 113. Glycine 139 is a binding site for NADP(+). In terms of domain architecture, KARI C-terminal knotted spans 188 to 333 (TFKEETETDL…KQLRAKMVWL (146 aa)). Mg(2+) contacts are provided by aspartate 196, glutamate 200, glutamate 232, and glutamate 236. Serine 257 contacts substrate.

The protein belongs to the ketol-acid reductoisomerase family. It depends on Mg(2+) as a cofactor.

The enzyme catalyses (2R)-2,3-dihydroxy-3-methylbutanoate + NADP(+) = (2S)-2-acetolactate + NADPH + H(+). It catalyses the reaction (2R,3R)-2,3-dihydroxy-3-methylpentanoate + NADP(+) = (S)-2-ethyl-2-hydroxy-3-oxobutanoate + NADPH + H(+). The protein operates within amino-acid biosynthesis; L-isoleucine biosynthesis; L-isoleucine from 2-oxobutanoate: step 2/4. It participates in amino-acid biosynthesis; L-valine biosynthesis; L-valine from pyruvate: step 2/4. Involved in the biosynthesis of branched-chain amino acids (BCAA). Catalyzes an alkyl-migration followed by a ketol-acid reduction of (S)-2-acetolactate (S2AL) to yield (R)-2,3-dihydroxy-isovalerate. In the isomerase reaction, S2AL is rearranged via a Mg-dependent methyl migration to produce 3-hydroxy-3-methyl-2-ketobutyrate (HMKB). In the reductase reaction, this 2-ketoacid undergoes a metal-dependent reduction by NADPH to yield (R)-2,3-dihydroxy-isovalerate. In Xylella fastidiosa (strain Temecula1 / ATCC 700964), this protein is Ketol-acid reductoisomerase (NADP(+)).